Reading from the N-terminus, the 363-residue chain is Glutamate--cysteine ligase (363 aa).

Belongs to the glutamate--cysteine ligase type 2 family. YbdK subfamily.

It catalyses the reaction L-cysteine + L-glutamate + ATP = gamma-L-glutamyl-L-cysteine + ADP + phosphate + H(+). Catalyzes the synthesis of gamma-glutamylcysteine (gamma-GC), the main low-molecular-weight thiol compound instead of glutathione in halophilic archaea. The chain is Glutamate--cysteine ligase from Haloquadratum walsbyi (strain DSM 16790 / HBSQ001).